The chain runs to 512 residues: Glutathione-binding protein GsiB (512 aa).

An N-terminal signal peptide occupies residues 1-26; that stretch reads MARAVHRSGLVALGIATALMASCAFA.

It belongs to the bacterial solute-binding protein 5 family. As to quaternary structure, the complex is composed of two ATP-binding proteins (GsiA), two transmembrane proteins (GsiC and GsiD) and a solute-binding protein (GsiB).

It localises to the periplasm. Functionally, part of the ABC transporter complex GsiABCD involved in glutathione import. Binds glutathione. The sequence is that of Glutathione-binding protein GsiB from Escherichia coli O1:K1 / APEC.